We begin with the raw amino-acid sequence, 789 residues long: MPAKGPLTPQQLSLINRYWRAANYLSVGQIYLMKNPLLREPLQPEHIKPRLLGHWGTTPGLNFIYAHLNRIIQQRNANVIYICGPGHGGPGMVANTYLEGTYSEIYPAISEDEAGMERLFRQFSFPGGIPSHAAPETPGSIHEGGELGYALVHAYGAAFDNPDLVVACVVGDGEAETGALATSWHSNKFLNPARDGAVLPILHLNGYKIANPTVLARLSDDDLDNLFRGYGYEPFFVEGSEPADMHQKMAATLDTIFQRIQDIKKNADVHSPERPRWPMIILRSPKGWTGPKTVDGLVVENYWRAHEVPVANCRENDAHRKILEDWMKSYDPSDLFDEKGALKPELRALAPKGEARIGANPHANGGLLRKELHMPDFRQYAVNVTEPGAIEAQSTKILGDFLRDVMKLNETEKNFRIFGPDETASNRLGSVLEATNRVWMAETLDMDDHLAADGRVMEVLSEHLCQGWLEGYLLSGRHGFFSCYEAFIHIIDSMFNQHAKWLQVARELEWRKPISSLNYLLTSHVWRQDHNGFSHQDPGFVDLVANKSADIARVYFPPDANTLLWVGDHCLKTWNRVNVIVAGKQPEPQWLTMAEAEKHCEAGLGIWEWAGTEDGLEPDIVMACAGDVPTMETLAAVDLLRQSLPHLRIRVVNVVDLMVLQSPHQHPHGISDEEFDRMFTTNRPVIFAYHGYPYLIHRLVYKRTNHSNFHVRGFIEQGTTTTPFDMTVLNELDRFHLAMEAVERLPLGESVAKPLIDNFTEKLALHKDYIRQHGEDMPEIRDWKWTWPR.

The protein belongs to the XFP family. It depends on thiamine diphosphate as a cofactor.

The protein is Probable phosphoketolase of Brucella abortus (strain 2308).